The chain runs to 322 residues: Tetraacyldisaccharide 4'-kinase (322 aa).

Residue 54–61 participates in ATP binding; sequence SVGGTGKT.

Belongs to the LpxK family.

The catalysed reaction is a lipid A disaccharide + ATP = a lipid IVA + ADP + H(+). It functions in the pathway glycolipid biosynthesis; lipid IV(A) biosynthesis; lipid IV(A) from (3R)-3-hydroxytetradecanoyl-[acyl-carrier-protein] and UDP-N-acetyl-alpha-D-glucosamine: step 6/6. Transfers the gamma-phosphate of ATP to the 4'-position of a tetraacyldisaccharide 1-phosphate intermediate (termed DS-1-P) to form tetraacyldisaccharide 1,4'-bis-phosphate (lipid IVA). This Francisella tularensis subsp. holarctica (strain FTNF002-00 / FTA) protein is Tetraacyldisaccharide 4'-kinase.